The chain runs to 442 residues: uncharacterized protein (442 aa).

[4Fe-4S] cluster-binding residues include Cys43, Cys49, Cys52, and Cys130. Residues Gln273, Tyr302, Glu323, and Asp372 each coordinate S-adenosyl-L-methionine. Catalysis depends on Cys399, which acts as the Nucleophile.

This sequence belongs to the class I-like SAM-binding methyltransferase superfamily. RNA M5U methyltransferase family.

This is an uncharacterized protein from Protochlamydia amoebophila (strain UWE25).